The sequence spans 121 residues: Basic phospholipase A2 homolog blK-PLA2 (121 aa).

7 disulfides stabilise this stretch: Cys26/Cys115, Cys28/Cys44, Cys43/Cys95, Cys49/Cys121, Cys50/Cys88, Cys57/Cys81, and Cys75/Cys86. Residues 105 to 117 (KKYRYHLKPFCKK) form an important for membrane-damaging activities in eukaryotes and bacteria; heparin-binding region.

It belongs to the phospholipase A2 family. Group II subfamily. K49 sub-subfamily. As to quaternary structure, homodimer; non-covalently linked. As to expression, expressed by the venom gland.

It is found in the secreted. Functionally, snake venom phospholipase A2 (PLA2) homolog that lacks enzymatic activity. Shows myotoxic and edema-inducing activities in vivo. A model of myotoxic mechanism has been proposed: an apo Lys49-PLA2 is activated by the entrance of a hydrophobic molecule (e.g. fatty acid) at the hydrophobic channel of the protein leading to a reorientation of a monomer. This reorientation causes a transition between 'inactive' to 'active' states, causing alignment of C-terminal and membrane-docking sites (MDoS) side-by-side and putting the membrane-disruption sites (MDiS) in the same plane, exposed to solvent and in a symmetric position for both monomers. The MDoS region stabilizes the toxin on membrane by the interaction of charged residues with phospholipid head groups. Subsequently, the MDiS region destabilizes the membrane with penetration of hydrophobic residues. This insertion causes a disorganization of the membrane, allowing an uncontrolled influx of ions (i.e. calcium and sodium), and eventually triggering irreversible intracellular alterations and cell death. The polypeptide is Basic phospholipase A2 homolog blK-PLA2 (Bothrops leucurus (Whitetail lancehead)).